Consider the following 162-residue polypeptide: Cyclic pyranopterin monophosphate synthase (162 aa).

Substrate-binding positions include 75–77 (LCH) and 113–114 (ME). The active site involves Asp-128.

The protein belongs to the MoaC family. As to quaternary structure, homohexamer; trimer of dimers.

The catalysed reaction is (8S)-3',8-cyclo-7,8-dihydroguanosine 5'-triphosphate = cyclic pyranopterin phosphate + diphosphate. It participates in cofactor biosynthesis; molybdopterin biosynthesis. Functionally, catalyzes the conversion of (8S)-3',8-cyclo-7,8-dihydroguanosine 5'-triphosphate to cyclic pyranopterin monophosphate (cPMP). This is Cyclic pyranopterin monophosphate synthase from Burkholderia cenocepacia (strain ATCC BAA-245 / DSM 16553 / LMG 16656 / NCTC 13227 / J2315 / CF5610) (Burkholderia cepacia (strain J2315)).